We begin with the raw amino-acid sequence, 273 residues long: Large ribosomal subunit protein uL2 (273 aa).

Disordered stretches follow at residues 28–53 (KPFA…TTRH) and 221–273 (RGTA…RRSK). Residues 39–48 (KSGGRNNNGR) show a composition bias toward low complexity.

This sequence belongs to the universal ribosomal protein uL2 family. As to quaternary structure, part of the 50S ribosomal subunit. Forms a bridge to the 30S subunit in the 70S ribosome.

In terms of biological role, one of the primary rRNA binding proteins. Required for association of the 30S and 50S subunits to form the 70S ribosome, for tRNA binding and peptide bond formation. It has been suggested to have peptidyltransferase activity; this is somewhat controversial. Makes several contacts with the 16S rRNA in the 70S ribosome. The protein is Large ribosomal subunit protein uL2 of Klebsiella pneumoniae (strain 342).